The following is a 122-amino-acid chain: NADPH-dependent 7-cyano-7-deazaguanine reductase (122 aa).

The active-site Thioimide intermediate is cysteine 34. Residue aspartate 41 is the Proton donor of the active site. Substrate is bound by residues 56–58 and 75–76; these read VEL and HE.

Belongs to the GTP cyclohydrolase I family. QueF type 1 subfamily.

The protein localises to the cytoplasm. It catalyses the reaction 7-aminomethyl-7-carbaguanine + 2 NADP(+) = 7-cyano-7-deazaguanine + 2 NADPH + 3 H(+). It functions in the pathway tRNA modification; tRNA-queuosine biosynthesis. Functionally, catalyzes the NADPH-dependent reduction of 7-cyano-7-deazaguanine (preQ0) to 7-aminomethyl-7-deazaguanine (preQ1). The protein is NADPH-dependent 7-cyano-7-deazaguanine reductase of Anaeromyxobacter dehalogenans (strain 2CP-C).